A 1499-amino-acid chain; its full sequence is Rap guanine nucleotide exchange factor 2 (1499 aa).

2 disordered regions span residues 40–59 (HVSS…SSSL) and 68–101 (SEAG…SDPL). Positions 83–94 (VDSEDDDDEEDI) are enriched in acidic residues. Residue 135–254 (AFANMTMSVR…VEEEGEIVMV (120 aa)) coordinates a nucleoside 3',5'-cyclic phosphate. Positions 267–380 (KGHIVIKGTS…RLLNIACAAK (114 aa)) constitute an N-terminal Ras-GEF domain. The PDZ domain occupies 385 to 470 (LMTLTKPSRE…ITVKTNLFVF (86 aa)). A Phosphoserine modification is found at Ser501. Positions 606–692 (PDQVLRVFKA…GRYYLKNNME (87 aa)) constitute a Ras-associating domain. Position 644 is a phosphothreonine; by PLK2 (Thr644). The Ras-GEF domain maps to 717-944 (STVEVATQLS…SQGSTNATVL (228 aa)). Phosphoserine; by PLK2 is present on Ser806. The residue at position 930 (Ser930) is a Phosphoserine. Phosphoserine; by PLK2 is present on Ser933. Residues 1002–1050 (PATNTLPKNPGDKKPVKSETSPVAPRAGSQQKAQSLPQPQQQPPPAHKI) form a disordered region. Ser1022 carries the post-translational modification Phosphoserine. Residues 1031 to 1040 (QQKAQSLPQP) are compositionally biased toward low complexity. A phosphoserine mark is found at Ser1080, Ser1089, Ser1095, Ser1116, Ser1120, and Ser1159. Residues 1095–1160 (SLERHKKQAE…RSSIVSNSSF (66 aa)) are disordered. 2 stretches are compositionally biased toward low complexity: residues 1111 to 1125 (SSQL…QSSP) and 1141 to 1160 (SDSG…NSSF). Position 1176 is a phosphoserine; by PLK2 (Ser1176). Disordered regions lie at residues 1224–1256 (PSTE…SSGS) and 1305–1499 (TKYN…VSAV). Polar residues-rich tracts occupy residues 1247–1256 (GSWTSCSSGS) and 1307–1331 (YNRQ…SSTG). A compositionally biased stretch (low complexity) spans 1355–1366 (EAESSSLTSVTT). Residues 1441 to 1462 (SSDTAGPSSVQQPHGHPTSSRP) are compositionally biased toward polar residues. Residues 1488-1499 (TEEDEDEQVSAV) are compositionally biased toward acidic residues.

This sequence belongs to the RAPGEF2 family. Interacts with CDH1, CTNNB1 and TJP1. Interacts (via C-terminal domain) with MAGI2 (via PDZ and WW domains); the interaction occurs before or after NGF stimulation. Interacts with KIDINS220 and NTRK1; the interactions occur after NGF stimulation. Found in a complex, at least composed of KIDINS220, MAGI2, NTRK1 and RAPGEF2; the complex is mainly formed at late endosomes in a neuronal growth factor (NGF)-dependent manner. Interacts (via C-terminal domain) with NEDD4 (via WW domains); this interaction leads to ubiquitination and degradation via the proteasome pathway in a cAMP-independent manner. Interacts with MAGI1 isoform 3 (via PDZ domain). Interacts with ADRB1 (via C-terminal PDZ motif); the interaction is direct. Interacts (via Ras-associating domain) with RAP1A (via GTP-bound active form). Interacts weakly with HRAS (via GDP- and GTP-bound forms). Interacts (via C-terminal domain) with MAGI2 (via PDZ and WW domains). Post-translationally, ubiquitinated by NEDD4, leading to proteasomal degradation. Phosphorylation by PLK2 promotes its activity. Expressed in primary neuronal and endocrine cells (at protein level). Highest expression levels in brain. Lower expression levels in heart, kidney, lung, placenta and blood leukocytes.

The protein resides in the cytoplasm. It is found in the perinuclear region. It localises to the cell membrane. Its subcellular location is the late endosome. The protein localises to the cell junction. Functions as a guanine nucleotide exchange factor (GEF), which activates Rap and Ras family of small GTPases by exchanging bound GDP for free GTP in a cAMP-dependent manner. Serves as a link between cell surface receptors and Rap/Ras GTPases in intracellular signaling cascades. Also acts as an effector for Rap1 by direct association with Rap1-GTP thereby leading to the amplification of Rap1-mediated signaling. Shows weak activity on HRAS. It is controversial whether RAPGEF2 binds cAMP and cGMP or not. Its binding to ligand-activated beta-1 adrenergic receptor ADRB1 leads to the Ras activation through the G(s)-alpha signaling pathway. Involved in the cAMP-induced Ras and Erk1/2 signaling pathway that leads to sustained inhibition of long term melanogenesis by reducing dendrite extension and melanin synthesis. Also provides inhibitory signals for cell proliferation of melanoma cells and promotes their apoptosis in a cAMP-independent nanner. Regulates cAMP-induced neuritogenesis by mediating the Rap1/B-Raf/ERK signaling through a pathway that is independent on both PKA and RAPGEF3/RAPGEF4. Involved in neuron migration and in the formation of the major forebrain fiber connections forming the corpus callosum, the anterior commissure and the hippocampal commissure during brain development. Involved in neuronal growth factor (NGF)-induced sustained activation of Rap1 at late endosomes and in brain-derived neurotrophic factor (BDNF)-induced axon outgrowth of hippocampal neurons. Plays a role in the regulation of embryonic blood vessel formation and in the establishment of basal junction integrity and endothelial barrier function. May be involved in the regulation of the vascular endothelial growth factor receptor KDR and cadherin CDH5 expression at allantois endothelial cell-cell junctions. This chain is Rap guanine nucleotide exchange factor 2 (RAPGEF2), found in Homo sapiens (Human).